We begin with the raw amino-acid sequence, 265 residues long: 3-methyl-2-oxobutanoate hydroxymethyltransferase (265 aa).

Mg(2+)-binding residues include aspartate 44 and aspartate 83. Residues 44–45 (DS), aspartate 83, and lysine 113 contribute to the 3-methyl-2-oxobutanoate site. Glutamate 115 is a Mg(2+) binding site. Glutamate 183 functions as the Proton acceptor in the catalytic mechanism.

This sequence belongs to the PanB family. In terms of assembly, homodecamer; pentamer of dimers. It depends on Mg(2+) as a cofactor.

Its subcellular location is the cytoplasm. The enzyme catalyses 3-methyl-2-oxobutanoate + (6R)-5,10-methylene-5,6,7,8-tetrahydrofolate + H2O = 2-dehydropantoate + (6S)-5,6,7,8-tetrahydrofolate. It functions in the pathway cofactor biosynthesis; (R)-pantothenate biosynthesis; (R)-pantoate from 3-methyl-2-oxobutanoate: step 1/2. Catalyzes the reversible reaction in which hydroxymethyl group from 5,10-methylenetetrahydrofolate is transferred onto alpha-ketoisovalerate to form ketopantoate. The sequence is that of 3-methyl-2-oxobutanoate hydroxymethyltransferase from Leptospira borgpetersenii serovar Hardjo-bovis (strain L550).